The chain runs to 227 residues: Staphylococcal superantigen-like 10 (227 aa).

The signal sequence occupies residues 1 to 30 (MKFTALAKATLALGILTTGTLTTEVHSGHA).

It belongs to the staphylococcal/streptococcal toxin family. Interacts with prothrombin/F2 and coagulation factor X/F12. Interacts with human CXCR4.

The protein resides in the secreted. Functionally, plays a role in the inhibition of host complement activation via the classical pathway by interacting with the Fc region of human IgG and thereby interfering with the IgG/C1q interaction. Also inhibits the penultimate step of plasma clotting by interacting with prothrombin/F2 and coagulation factor X/F12. Does not affect the protease activity of thrombin but interferes with the conversion of prothrombin to thrombin. Interacts with human receptor CXCR4 and specifically inhibits CXCL12-induced calcium mobilization and cell migration. The protein is Staphylococcal superantigen-like 10 of Staphylococcus aureus (strain NCTC 8325 / PS 47).